A 303-amino-acid polypeptide reads, in one-letter code: Glyceraldehyde-3-phosphate dehydrogenase (303 aa).

NAD(+) contacts are provided by residues 6–7, Asp28, Arg72, and Thr114; that span reads RI. D-glyceraldehyde 3-phosphate-binding positions include 143-145, Thr174, 203-204, and Arg226; these read SCT and TG. The active-site Nucleophile is Cys144.

Belongs to the glyceraldehyde-3-phosphate dehydrogenase family. As to quaternary structure, homotetramer.

It localises to the cytoplasm. The enzyme catalyses D-glyceraldehyde 3-phosphate + phosphate + NAD(+) = (2R)-3-phospho-glyceroyl phosphate + NADH + H(+). It participates in carbohydrate degradation; glycolysis; pyruvate from D-glyceraldehyde 3-phosphate: step 1/5. Catalyzes the oxidative phosphorylation of glyceraldehyde 3-phosphate (G3P) to 1,3-bisphosphoglycerate (BPG) using the cofactor NAD. The first reaction step involves the formation of a hemiacetal intermediate between G3P and a cysteine residue, and this hemiacetal intermediate is then oxidized to a thioester, with concomitant reduction of NAD to NADH. The reduced NADH is then exchanged with the second NAD, and the thioester is attacked by a nucleophilic inorganic phosphate to produce BPG. The polypeptide is Glyceraldehyde-3-phosphate dehydrogenase (gap) (Klebsiella pneumoniae).